Reading from the N-terminus, the 536-residue chain is MFS-type efflux pump MFS1 (536 aa).

3 helical membrane passes run 30 to 50 (VTGL…LLVA), 80 to 100 (YLLT…FFPV), and 102 to 122 (WVFL…GAAP). An N-linked (GlcNAc...) asparagine glycan is attached at Asn123. Helical transmembrane passes span 133 to 153 (VAGI…AYSI), 163 to 183 (GAIG…GGAF), and 191 to 211 (WCFY…LIFL). Asn221 is a glycosylation site (N-linked (GlcNAc...) asparagine). Transmembrane regions (helical) follow at residues 234 to 254 (IGTA…QWGG), 264 to 284 (IIAL…FQIR), 306 to 326 (FFLF…PIWF), 342 to 362 (IPMV…VTAI), 366 to 386 (APLY…LTTF), 400 to 420 (IIFG…AQAV), 426 to 446 (VAVG…LFVS), and 503 to 523 (TWYV…GMEW).

The protein belongs to the major facilitator superfamily. TCR/Tet family.

The protein resides in the cell membrane. Functionally, MFS-type efflux pump involved in the modulation susceptibility to azoles, including fluconazole, itraconazole, miconazole and voriconazole. Also confers increased resistance chloramphenicol and thiamphenicol, suggesting that it acts as a pleiotropic drug transporter with a broad substrate spectrum. Finally, increases the tolerance to cycloheximide when expressed in S.cerevisiae, but not in dermatophyte species. In Arthroderma benhamiae (strain ATCC MYA-4681 / CBS 112371) (Trichophyton mentagrophytes), this protein is MFS-type efflux pump MFS1.